A 372-amino-acid polypeptide reads, in one-letter code: Aminomethyltransferase (372 aa).

Belongs to the GcvT family. As to quaternary structure, the glycine cleavage system is composed of four proteins: P, T, L and H.

It catalyses the reaction N(6)-[(R)-S(8)-aminomethyldihydrolipoyl]-L-lysyl-[protein] + (6S)-5,6,7,8-tetrahydrofolate = N(6)-[(R)-dihydrolipoyl]-L-lysyl-[protein] + (6R)-5,10-methylene-5,6,7,8-tetrahydrofolate + NH4(+). The glycine cleavage system catalyzes the degradation of glycine. In Burkholderia cenocepacia (strain ATCC BAA-245 / DSM 16553 / LMG 16656 / NCTC 13227 / J2315 / CF5610) (Burkholderia cepacia (strain J2315)), this protein is Aminomethyltransferase.